Reading from the N-terminus, the 302-residue chain is Succinate--CoA ligase [ADP-forming] subunit alpha (302 aa).

CoA-binding positions include 17 to 20 (TGST), K43, and 96 to 98 (ITE). Residue Y159 coordinates substrate. Catalysis depends on H247, which acts as the Tele-phosphohistidine intermediate.

This sequence belongs to the succinate/malate CoA ligase alpha subunit family. In terms of assembly, heterotetramer of two alpha and two beta subunits.

It carries out the reaction succinate + ATP + CoA = succinyl-CoA + ADP + phosphate. The enzyme catalyses GTP + succinate + CoA = succinyl-CoA + GDP + phosphate. It functions in the pathway carbohydrate metabolism; tricarboxylic acid cycle; succinate from succinyl-CoA (ligase route): step 1/1. Its function is as follows. Succinyl-CoA synthetase functions in the citric acid cycle (TCA), coupling the hydrolysis of succinyl-CoA to the synthesis of either ATP or GTP and thus represents the only step of substrate-level phosphorylation in the TCA. The alpha subunit of the enzyme binds the substrates coenzyme A and phosphate, while succinate binding and nucleotide specificity is provided by the beta subunit. The protein is Succinate--CoA ligase [ADP-forming] subunit alpha of Staphylococcus epidermidis (strain ATCC 12228 / FDA PCI 1200).